Here is a 301-residue protein sequence, read N- to C-terminus: 4-hydroxybenzoate octaprenyltransferase (301 aa).

8 consecutive transmembrane segments (helical) span residues 34-54 (IGSLLLLWPTWWALWLAADGL), 57-77 (LWTLLVFTAGVWLTRSAGCVI), 108-128 (LWVFVVLMLVAFALVLTLNWL), 152-172 (LPQVYLGMAFGWGIPMAFAAV), 176-196 (VPLLGWLLYAANILWATAYDT), 221-241 (FDLIAQGILYALMAATLVLVG), 245-265 (DLGVAYWAGLAVAALLVAYEF), and 279-299 (AFLHNNWVGLAIFVGIAVAVA).

This sequence belongs to the UbiA prenyltransferase family. Requires Mg(2+) as cofactor.

It is found in the cell inner membrane. The catalysed reaction is all-trans-octaprenyl diphosphate + 4-hydroxybenzoate = 4-hydroxy-3-(all-trans-octaprenyl)benzoate + diphosphate. It functions in the pathway cofactor biosynthesis; ubiquinone biosynthesis. Functionally, catalyzes the prenylation of para-hydroxybenzoate (PHB) with an all-trans polyprenyl group. Mediates the second step in the final reaction sequence of ubiquinone-8 (UQ-8) biosynthesis, which is the condensation of the polyisoprenoid side chain with PHB, generating the first membrane-bound Q intermediate 3-octaprenyl-4-hydroxybenzoate. This Xanthomonas euvesicatoria pv. vesicatoria (strain 85-10) (Xanthomonas campestris pv. vesicatoria) protein is 4-hydroxybenzoate octaprenyltransferase.